A 75-amino-acid polypeptide reads, in one-letter code: Large ribosomal subunit protein bL31 (75 aa).

4 residues coordinate Zn(2+): Cys-16, Cys-18, Cys-38, and Cys-41.

Belongs to the bacterial ribosomal protein bL31 family. Type A subfamily. In terms of assembly, part of the 50S ribosomal subunit. Requires Zn(2+) as cofactor.

Its function is as follows. Binds the 23S rRNA. This Nocardioides sp. (strain ATCC BAA-499 / JS614) protein is Large ribosomal subunit protein bL31.